A 300-amino-acid chain; its full sequence is Light-independent protochlorophyllide reductase iron-sulfur ATP-binding protein (300 aa).

ATP is bound by residues 10 to 15 (GIGKST) and Lys39. Mg(2+) is bound at residue Ser14. Positions 95 and 129 each coordinate [4Fe-4S] cluster. 180 to 181 (NR) contacts ATP.

The protein belongs to the NifH/BchL/ChlL family. In terms of assembly, homodimer. Protochlorophyllide reductase is composed of three subunits; ChlL, ChlN and ChlB. It depends on [4Fe-4S] cluster as a cofactor.

Its subcellular location is the plastid. It localises to the chloroplast. The catalysed reaction is chlorophyllide a + oxidized 2[4Fe-4S]-[ferredoxin] + 2 ADP + 2 phosphate = protochlorophyllide a + reduced 2[4Fe-4S]-[ferredoxin] + 2 ATP + 2 H2O. Its pathway is porphyrin-containing compound metabolism; chlorophyll biosynthesis (light-independent). In terms of biological role, component of the dark-operative protochlorophyllide reductase (DPOR) that uses Mg-ATP and reduced ferredoxin to reduce ring D of protochlorophyllide (Pchlide) to form chlorophyllide a (Chlide). This reaction is light-independent. The L component serves as a unique electron donor to the NB-component of the complex, and binds Mg-ATP. This Auxenochlorella protothecoides (Green microalga) protein is Light-independent protochlorophyllide reductase iron-sulfur ATP-binding protein.